Consider the following 166-residue polypeptide: MAVSCSLNHSTYLQRQNLVCYLRNPHYGSLIYADGHGEVWTDWNDMSKFLQYGWRCTTNENSYSNRTLVGNWNQERYDLKNIVKPKPLPSQFGHAFETTYDANYSRKKPQSTHRFKREPHWFPGHQPELDPPHYKCTAKSTYMTNYSEPQPTHYSCCVYDPSVSQS.

2 mn regions span residues 98–109 (TTYDANYSRKKP) and 139–149 (KSTYMTNYSEP).

Belongs to the CFAP68 family. Microtubule inner protein component of sperm flagellar doublet microtubules.

It is found in the cytoplasm. Its subcellular location is the cytoskeleton. It localises to the cilium axoneme. The protein localises to the flagellum axoneme. The protein resides in the nucleus. It is found in the cell projection. Its subcellular location is the cilium. In terms of biological role, microtubule inner protein (MIP) part of the dynein-decorated doublet microtubules (DMTs) in cilia axoneme, which is required for motile cilia beating. The chain is Cilia- and flagella-associated protein 68 (Cfap68) from Mus musculus (Mouse).